Reading from the N-terminus, the 433-residue chain is Enolase (433 aa).

Residue glutamine 167 participates in (2R)-2-phosphoglycerate binding. Residue glutamate 209 is the Proton donor of the active site. Aspartate 246, glutamate 291, and aspartate 318 together coordinate Mg(2+). Positions 343, 372, 373, and 394 each coordinate (2R)-2-phosphoglycerate. Lysine 343 serves as the catalytic Proton acceptor.

It belongs to the enolase family. As to quaternary structure, component of the RNA degradosome, a multiprotein complex involved in RNA processing and mRNA degradation. The cofactor is Mg(2+).

It localises to the cytoplasm. It is found in the secreted. Its subcellular location is the cell surface. It carries out the reaction (2R)-2-phosphoglycerate = phosphoenolpyruvate + H2O. It functions in the pathway carbohydrate degradation; glycolysis; pyruvate from D-glyceraldehyde 3-phosphate: step 4/5. In terms of biological role, catalyzes the reversible conversion of 2-phosphoglycerate (2-PG) into phosphoenolpyruvate (PEP). It is essential for the degradation of carbohydrates via glycolysis. This is Enolase from Haemophilus ducreyi (strain 35000HP / ATCC 700724).